The chain runs to 196 residues: Small ribosomal subunit protein uS4c (196 aa).

The tract at residues 15–43 is disordered; that stretch reads LGALPGLTRKTPKSGSNQKKKFHSGKKEQ. An S4 RNA-binding domain is found at 89–150; the sequence is MRLDNILFRL…NQRSKRLVQN (62 aa).

The protein belongs to the universal ribosomal protein uS4 family. Part of the 30S ribosomal subunit. Contacts protein S5. The interaction surface between S4 and S5 is involved in control of translational fidelity.

It is found in the plastid. Its subcellular location is the chloroplast. In terms of biological role, one of the primary rRNA binding proteins, it binds directly to 16S rRNA where it nucleates assembly of the body of the 30S subunit. Its function is as follows. With S5 and S12 plays an important role in translational accuracy. This is Small ribosomal subunit protein uS4c (rps4) from Melinis repens (Red Natal grass).